Here is a 289-residue protein sequence, read N- to C-terminus: Iodotyrosine deiodinase 1 (289 aa).

Residues 1–21 (MYFLTPILVAILCILVVWIFK) traverse the membrane as a helical segment. Residues 29–58 (KKKGEPRTRAEARPWVDEDLKDSSDLHQAE) are compositionally biased toward basic and acidic residues. A disordered region spans residues 29–69 (KKKGEPRTRAEARPWVDEDLKDSSDLHQAEEDADEWQESEE). Residues 59-69 (EDADEWQESEE) show a composition bias toward acidic residues. FMN is bound by residues 100 to 104 (RRSVR), Ser-128, and 128 to 129 (SG). Ala-130, Glu-157, Tyr-161, and Lys-182 together coordinate 3-iodo-L-tyrosine. FMN-binding positions include 237–239 (TTT) and Arg-279.

Belongs to the nitroreductase family. In terms of assembly, homodimer. FMN serves as cofactor. In terms of tissue distribution, expressed at a high level in thyroid gland (at protein level). Expressed at a high level in thyroid gland and at lower level in kidney and trachea.

The protein localises to the cell membrane. The protein resides in the cytoplasmic vesicle membrane. It carries out the reaction 2 iodide + L-tyrosine + 2 NADP(+) = 3,5-diiodo-L-tyrosine + 2 NADPH + H(+). The catalysed reaction is iodide + L-tyrosine + NADP(+) = 3-iodo-L-tyrosine + NADPH. It catalyses the reaction 3-iodo-L-tyrosine + iodide + NADP(+) = 3,5-diiodo-L-tyrosine + NADPH + H(+). The enzyme catalyses L-tyrosine + chloride + NADP(+) = 3-chloro-L-tyrosine + NADPH. It carries out the reaction bromide + L-tyrosine + NADP(+) = 3-bromo-L-tyrosine + NADPH. In terms of biological role, catalyzes the dehalogenation of halotyrosines such as 3-bromo-L-tyrosine, 3-chloro-L-tyrosine, 3-iodo-L-tyrosine and 3,5-diiodo-L-tyrosine. During thyroid hormone biosynthesis, facilitates iodide salvage by catalysing the oxidative NADPH-dependent deiodination of the halogenated by-products of thyroid hormone production, monoiodotyrosine (L-MIT) and diiodotyrosine (L-DIT). The scavanged iodide can then reenter the hormone-producing pathways. Acts more efficiently on 3-iodo-L-tyrosine than 3,5-diiodo-L-tyrosine. The sequence is that of Iodotyrosine deiodinase 1 from Homo sapiens (Human).